The following is a 350-amino-acid chain: Protein RecA (350 aa).

67-74 is a binding site for ATP; sequence GPESSGKT.

This sequence belongs to the RecA family.

It localises to the cytoplasm. Functionally, can catalyze the hydrolysis of ATP in the presence of single-stranded DNA, the ATP-dependent uptake of single-stranded DNA by duplex DNA, and the ATP-dependent hybridization of homologous single-stranded DNAs. It interacts with LexA causing its activation and leading to its autocatalytic cleavage. This Chlamydia felis (strain Fe/C-56) (Chlamydophila felis) protein is Protein RecA.